A 591-amino-acid chain; its full sequence is Proteasome-associated ATPase (591 aa).

Positions 10–77 form a coiled coil; that stretch reads VAAAEELHAL…LREEVDRLGQ (68 aa). 278 to 283 is a binding site for ATP; sequence GCGKTL. The docks into pockets in the proteasome alpha-ring stretch occupies residues 590 to 591; sequence YL.

The protein belongs to the AAA ATPase family. In terms of assembly, homohexamer. Assembles into a hexameric ring structure that likely caps the 20S proteasome core. Can form a complex composed of two stacked hexameric rings in vitro. Probably interacts with the prokaryotic ubiquitin-like protein Pup through a hydrophobic interface; the expected interacting region of ARC lies in its N-terminal coiled-coil domain. There is likely one Pup binding site per ARC hexamer ring. Upon ATP-binding, the C-terminus of ARC probably interacts with the alpha-rings of the proteasome core, possibly by binding to the intersubunit pockets.

It participates in protein degradation; proteasomal Pup-dependent pathway. ATPase activity is inhibited by N-ethylmaleimide (NEM) but not by sodium azide. ATPase which is responsible for recognizing, binding, unfolding and translocation of pupylated proteins into the bacterial 20S proteasome core particle. May be essential for opening the gate of the 20S proteasome via an interaction with its C-terminus, thereby allowing substrate entry and access to the site of proteolysis. Thus, the C-termini of the proteasomal ATPase may function like a 'key in a lock' to induce gate opening and therefore regulate proteolysis. This Rhodococcus erythropolis (Arthrobacter picolinophilus) protein is Proteasome-associated ATPase.